Reading from the N-terminus, the 78-residue chain is Conotoxin TsMSGL-11 (78 aa).

The first 24 residues, Met1–Ala24, serve as a signal peptide directing secretion. A propeptide spanning residues Gly25–Thr44 is cleaved from the precursor. 3 cysteine pairs are disulfide-bonded: Cys51/Cys63, Cys55/Cys72, and Cys62/Cys76. A Phenylalanine amide modification is found at Phe77.

This sequence belongs to the conotoxin O3 superfamily. In terms of tissue distribution, expressed by the venom duct.

It is found in the secreted. The sequence is that of Conotoxin TsMSGL-11 from Conus tessulatus (Tessellate cone).